Here is a 236-residue protein sequence, read N- to C-terminus: MDKVCAVFGGSRGIGKAVAQLMAQKGYRLAIVARNLEVAKATASELGGIHLAFRCNIAKEGDVHSTFEEMEKHLGPVNFLVNAAGINRDSLLVRTKTEDMLSQLHTNLLGTMLTCRAAMRTMIQQGGSIVNVGSIIGLKGNVGQAAYSATKGGLIGFSRSLAKEVARKKIRVNVVAPGFIHTDMTKHLKEEHFKKNIPLGRFGEALEVAHAVVFLLESPYITGHVLIVDGGLQLTA.

The residue at position 1 (M1) is an N-acetylmethionine. NADP(+) is bound by residues 11–14 (SRGI) and 34–35 (RN). Residue K40 is modified to N6-acetyllysine. An NADP(+)-binding site is contributed by 83–85 (AAG). The residue at position 96 (K96) is an N6-acetyllysine. Residue S134 participates in substrate binding. NADP(+) is bound by residues Y147, K151, and 180 to 182 (IHT). Y147 (proton acceptor) is an active-site residue. Position 194 is an N6-acetyllysine (K194).

The protein belongs to the short-chain dehydrogenases/reductases (SDR) family. In terms of assembly, homotetramer (in vitro). Heterotetramer with HSD17B8; contains two molecules each of HSD17B8 and CBR4. Does not form homotetramers when HSD17B8 is coexpressed, only heterotetramers (in vitro).

The protein resides in the mitochondrion matrix. It carries out the reaction a (3R)-hydroxyacyl-[ACP] + NADP(+) = a 3-oxoacyl-[ACP] + NADPH + H(+). The catalysed reaction is a quinone + NADPH + H(+) = a quinol + NADP(+). The protein operates within lipid metabolism; fatty acid biosynthesis. Functionally, component of the heterotetramer complex KAR (3-ketoacyl-[acyl carrier protein] reductase or 3-ketoacyl-[ACP] reductase) that forms part of the mitochondrial fatty acid synthase (mtFAS). Beta-subunit of the KAR heterotetramer complex, responsible for the 3-ketoacyl-ACP reductase activity of the mtFAS, reduces 3-oxoacyl-[ACP] to (3R)-hydroxyacyl-[ACP] in a NADPH-dependent manner with no chain length preference, thereby participating in mitochondrial fatty acid biosynthesis. The homotetramer has NADPH-dependent quinone reductase activity (in vitro), hence could play a role in protection against cytotoxicity of exogenous quinones. As a heterotetramer, it can also reduce 9,10-phenanthrenequinone, 1,4-benzoquinone and various other o-quinones and p-quinones (in vitro). The sequence is that of 3-oxoacyl-[acyl-carrier-protein] reductase (Cbr4) from Rattus norvegicus (Rat).